The following is a 615-amino-acid chain: Neurosecretory protein VGF (615 aa).

The signal sequence occupies residues 1 to 22 (MKALRLSASALFCLLLINGLGA). Disordered stretches follow at residues 22–201 (AAPP…ESPG) and 218–257 (PERA…PKTH). 2 stretches are compositionally biased toward pro residues: residues 25–35 (PGRPEAQPPPL) and 129–141 (PESP…PRPQ). The span at 179–194 (ETAAAETETRTHTLTR) shows a compositional bias: low complexity. At Gln-310 the chain carries Pyrrolidone carboxylic acid. The disordered stretch occupies residues 342–600 (RQRGLGGRGL…EAEERRLQEQ (259 aa)). Positions 378–394 (VGEEDEEAAEAEAEAEE) are enriched in acidic residues. Residues 415–433 (AEDKRSQEETPGHRRKEAE) are compositionally biased toward basic and acidic residues. A Phosphoserine; by FAM20C modification is found at Ser-420. The residue at position 424 (Thr-424) is a Phosphothreonine; by FAM20C. Positions 434–448 (GTEEGGEEEDDEEMD) are enriched in acidic residues. The segment covering 487 to 497 (PPEPVPPPRAA) has biased composition (pro residues). Pro-577 carries the post-translational modification Proline amide. Positions 577–599 (PGREAQARRAQEEAEAEERRLQE) are enriched in basic and acidic residues.

As to quaternary structure, interacts with HSPA8 on cell membrane. Interacts with C3AR1. Interacts with C1QBP. Multiple peptides are derived from VGF, with activities in synaptic plasticity, antidepression, penile erection, autonomic activation, and increases in energy expenditure. In terms of tissue distribution, central and peripheral nervous systems, synthesized exclusively in neuronal and neuroendocrine cells.

It is found in the secreted. The protein localises to the cytoplasmic vesicle. The protein resides in the secretory vesicle. Secreted polyprotein that is packaged and proteolytically processed by prohormone convertases PCSK1 and PCSK2 in a cell-type-specific manner. VGF and peptides derived from its processing play many roles in neurogenesis and neuroplasticity associated with learning, memory, depression and chronic pain. Functionally, plays a role in the control of body fluid homeostasis by regulating vasopressin release. Suppresses presynaptic glutamatergic neurons connected to vasopressin neurons. In terms of biological role, plays a role in the control of body fluid homeostasis by regulating vasopressin release. Activates GABAergic interneurons which are inhibitory neurons of the nervous system and thereby suppresses presynaptic glutamatergic neurons. Also stimulates feeding behavior in an orexin-dependent manner in the hypothalamus. Functions as a positive regulator for the activation of orexin neurons resulting in elevated gastric acid secretion and gastric emptying. Its function is as follows. Secreted multifunctional neuropeptide that binds to different cell receptors and thereby plays multiple physiological roles including modulation of energy expenditure, pain, response to stress, gastric regulation, glucose homeostasis as well as lipolysis. Activates the G-protein-coupled receptor C3AR1 via a folding-upon-binding mechanism leading to enhanced lipolysis in adipocytes. Interacts with C1QBP receptor in macrophages and microglia causing increased levels of intracellular calcium and hypersensitivity. Plays a role in the regulation of memory formation and depression-related behaviors potentially by influencing synaptic plasticity and neurogenesis. Induces acute and transient activation of the NTRK2/TRKB receptor and subsequent CREB phosphorylation. Also induces insulin secretion in insulinoma cells by increasing intracellular calcium mobilization. Functionally, has bactericidal activity against M.luteus, and antifungal activity against P. Pastoris. The chain is Neurosecretory protein VGF (VGF) from Homo sapiens (Human).